A 209-amino-acid chain; its full sequence is UPF0502 protein PSHAa0076 (209 aa).

It belongs to the UPF0502 family.

The protein is UPF0502 protein PSHAa0076 of Pseudoalteromonas translucida (strain TAC 125).